The chain runs to 281 residues: Probable replication-associated protein repA1 (281 aa).

This sequence belongs to the IncFII RepA family.

Functionally, this protein is essential for plasmid replication; it is involved in copy control functions. This chain is Probable replication-associated protein repA1 (repA1), found in Buchnera aphidicola subsp. Cinara cedri (strain Cc).